Reading from the N-terminus, the 759-residue chain is Catalase-peroxidase (759 aa).

The disordered stretch occupies residues 1–24; that stretch reads MTQDKCPFKEQSSQPNFAGGGTSN. The tryptophyl-tyrosyl-methioninium (Trp-Tyr) (with M-268) cross-link spans 96 to 242; sequence WHSAGTYRVF…LAAAHMGLIY (147 aa). Catalysis depends on His-97, which acts as the Proton acceptor. Positions 242–268 form a cross-link, tryptophyl-tyrosyl-methioninium (Tyr-Met) (with W-96); the sequence is YVNPEGPDGNPDPVAAAHDIRDTFGRM. Residue His-283 participates in heme b binding.

Belongs to the peroxidase family. Peroxidase/catalase subfamily. Homodimer or homotetramer. Requires heme b as cofactor. Post-translationally, formation of the three residue Trp-Tyr-Met cross-link is important for the catalase, but not the peroxidase activity of the enzyme.

The protein resides in the cytoplasm. It catalyses the reaction H2O2 + AH2 = A + 2 H2O. The catalysed reaction is 2 H2O2 = O2 + 2 H2O. Bifunctional enzyme with both catalase and broad-spectrum peroxidase activity. In Aspergillus fumigatus (strain CBS 144.89 / FGSC A1163 / CEA10) (Neosartorya fumigata), this protein is Catalase-peroxidase.